Here is a 795-residue protein sequence, read N- to C-terminus: Phenylalanine--tRNA ligase beta subunit (795 aa).

The tRNA-binding domain occupies Ala-39–Arg-148. The 76-residue stretch at Pro-401–Asn-476 folds into the B5 domain. Residues Asp-454, Asp-460, Glu-463, and Glu-464 each contribute to the Mg(2+) site. Positions Ser-701 to Arg-794 constitute an FDX-ACB domain.

This sequence belongs to the phenylalanyl-tRNA synthetase beta subunit family. Type 1 subfamily. Tetramer of two alpha and two beta subunits. It depends on Mg(2+) as a cofactor.

It is found in the cytoplasm. The catalysed reaction is tRNA(Phe) + L-phenylalanine + ATP = L-phenylalanyl-tRNA(Phe) + AMP + diphosphate + H(+). The sequence is that of Phenylalanine--tRNA ligase beta subunit (pheT) from Vibrio cholerae serotype O1 (strain ATCC 39315 / El Tor Inaba N16961).